Reading from the N-terminus, the 418-residue chain is Histidine--tRNA ligase (418 aa).

This sequence belongs to the class-II aminoacyl-tRNA synthetase family. Homodimer.

The protein resides in the cytoplasm. The catalysed reaction is tRNA(His) + L-histidine + ATP = L-histidyl-tRNA(His) + AMP + diphosphate + H(+). The protein is Histidine--tRNA ligase of Thermosipho africanus (strain TCF52B).